The primary structure comprises 426 residues: AP-1 complex subunit mu-1 (426 aa).

Residues 167 to 425 (KNEVFLDVIE…TQNGTEYSIR (259 aa)) form the MHD domain.

It belongs to the adaptor complexes medium subunit family. Adaptor protein complex 1 (AP-1) is a heterotetramer composed of two large adaptins (gamma-type subunit apl4 and beta-type subunit apl2), a medium adaptin (mu-type subunit apm1) and a small adaptin (sigma-type subunit aps1). AP-1 interacts with clathrin. Interacts with sad1.

The protein localises to the cytoplasmic vesicle. It localises to the clathrin-coated vesicle membrane. Its subcellular location is the membrane. The protein resides in the clathrin-coated pit. Functionally, component of the adaptor complexes which link clathrin to receptors in coated vesicles. Clathrin-associated protein complexes are believed to interact with the cytoplasmic tails of membrane proteins, leading to their selection and concentration. The chain is AP-1 complex subunit mu-1 (apm1) from Schizosaccharomyces pombe (strain 972 / ATCC 24843) (Fission yeast).